The following is a 306-amino-acid chain: Pantothenate kinase (306 aa).

Residue 91–98 coordinates ATP; sequence GSVAVGKS.

The protein belongs to the prokaryotic pantothenate kinase family.

It is found in the cytoplasm. It catalyses the reaction (R)-pantothenate + ATP = (R)-4'-phosphopantothenate + ADP + H(+). It participates in cofactor biosynthesis; coenzyme A biosynthesis; CoA from (R)-pantothenate: step 1/5. This Streptococcus pyogenes serotype M49 (strain NZ131) protein is Pantothenate kinase.